The chain runs to 1621 residues: Cilia- and flagella-associated protein 43 (1621 aa).

8 WD repeats span residues 97-138 (GAQL…PLCS), 141-180 (DSQT…NQYQ), 293-330 (LLEG…VKLE), 334-373 (NAQE…ETYK), 377-417 (VYSR…SVSS), 464-503 (LYCV…SFQV), 634-673 (GSQL…TMAQ), and 679-721 (YHNG…SSRL). Coiled coils occupy residues 792–812 (IKRK…AEKE), 850–870 (TEEQ…VRQE), 1026–1046 (CRQK…IQEI), 1098–1118 (VEEA…ALDD), 1150–1177 (TEEE…YSKE), 1362–1389 (DEKM…FQLD), 1451–1514 (IFQL…QEKQ), and 1591–1611 (AKIQ…LRMK).

It belongs to the CFAP43 family.

The protein resides in the cytoplasm. It localises to the cytoskeleton. It is found in the cilium axoneme. Its function is as follows. Involved in the regulation of the beating frequency of motile cilia in multiciliated cells of the larval epidermis. This chain is Cilia- and flagella-associated protein 43 (cfap43), found in Xenopus laevis (African clawed frog).